Reading from the N-terminus, the 122-residue chain is Large ribosomal subunit protein uL14 (122 aa).

The protein belongs to the universal ribosomal protein uL14 family. In terms of assembly, part of the 50S ribosomal subunit. Forms a cluster with proteins L3 and L19. In the 70S ribosome, L14 and L19 interact and together make contacts with the 16S rRNA in bridges B5 and B8.

Functionally, binds to 23S rRNA. Forms part of two intersubunit bridges in the 70S ribosome. This Alkalilimnicola ehrlichii (strain ATCC BAA-1101 / DSM 17681 / MLHE-1) protein is Large ribosomal subunit protein uL14.